A 156-amino-acid chain; its full sequence is Small ribosomal subunit protein uS7 (156 aa).

Belongs to the universal ribosomal protein uS7 family. As to quaternary structure, part of the 30S ribosomal subunit. Contacts proteins S9 and S11.

In terms of biological role, one of the primary rRNA binding proteins, it binds directly to 16S rRNA where it nucleates assembly of the head domain of the 30S subunit. Is located at the subunit interface close to the decoding center, probably blocks exit of the E-site tRNA. This Pseudarthrobacter chlorophenolicus (strain ATCC 700700 / DSM 12829 / CIP 107037 / JCM 12360 / KCTC 9906 / NCIMB 13794 / A6) (Arthrobacter chlorophenolicus) protein is Small ribosomal subunit protein uS7.